We begin with the raw amino-acid sequence, 136 residues long: Large ribosomal subunit protein uL16c (136 aa).

Positions 1–20 are disordered; that stretch reads MLSPKRTRFRKQHRGRMKGK.

Belongs to the universal ribosomal protein uL16 family. In terms of assembly, part of the 50S ribosomal subunit.

It localises to the plastid. Its subcellular location is the chloroplast. The protein is Large ribosomal subunit protein uL16c of Triticum aestivum (Wheat).